The chain runs to 109 residues: Flagellar hook-basal body complex protein FliE (109 aa).

This sequence belongs to the FliE family.

The protein resides in the bacterial flagellum basal body. The sequence is that of Flagellar hook-basal body complex protein FliE from Nitrosomonas eutropha (strain DSM 101675 / C91 / Nm57).